The sequence spans 455 residues: CDP-diacylglycerol--serine O-phosphatidyltransferase (455 aa).

2 consecutive PLD phosphodiesterase domains span residues 134-160 (VFGV…NNVY) and 356-383 (GDNT…NPRA).

Belongs to the CDP-alcohol phosphatidyltransferase class-II family. Multimeric.

Its subcellular location is the cytoplasm. It is found in the cell inner membrane. It catalyses the reaction a CDP-1,2-diacyl-sn-glycerol + L-serine = a 1,2-diacyl-sn-glycero-3-phospho-L-serine + CMP + H(+). The polypeptide is CDP-diacylglycerol--serine O-phosphatidyltransferase (pssA) (Haemophilus influenzae (strain ATCC 51907 / DSM 11121 / KW20 / Rd)).